Reading from the N-terminus, the 628-residue chain is MKQLLCYLPWLLLLSLVVSPFNEARFVVEKNSLSVTSPESIKGTHDSAIGNFGIPQYGGSMAGTVVYPKENQKSCKEFSDFSISFKSQPGALPTFLLVDRGDCFFALKVWNAQKAGASAVLVADNVDEPLITMDTPEEDVSSAKYIENITIPSALVTKGFGEKLKKAISGGDMVNLNLDWREAVPHPDDRVEYELWTNSNDECGVKCDMLMEFVKDFKGAAQILEKGGFTQFRPHYITWYCPHAFTLSRQCKSQCINKGRYCAPDPEQDFSSGYDGKDVVVENLRQLCVYKVANETGKPWVWWDYVTDFQIRCPMKEKKYNKDCAESVIKSLGIDSRKIDKCMGDPDADLDNPVLKEEQDAQVGKGTRGDVTILPTLVVNNRQYRGKLEKSAVLKALCSGFEESTEPAICLSTDMETNECLDNNGGCWQDKSANITACKDTFRGKVCVCPIVDGVRFKGDGYSHCEPSGPGRCTINNGGCWHEERDGHAFSACVDKDSVKCECPPGFKGDGVKKCEDINECKEKKACQCPECSCKNTWGSYECSCSGDLLYMRDHDTCISKTGSQVKSAWAAVWLIMLSLGLAAAGAYLVYKYRLRQYMDSEIRAIMAQYMPLDSQPEVPNHTNDERA.

An N-terminal signal peptide occupies residues 1–24 (MKQLLCYLPWLLLLSLVVSPFNEA). Residues 25–569 (RFVVEKNSLS…SKTGSQVKSA (545 aa)) lie on the Lumenal side of the membrane. Positions 56–168 (QYGGSMAGTV…GFGEKLKKAI (113 aa)) constitute a PA domain. Residues Asn148, Asn294, and Asn434 are each glycosylated (N-linked (GlcNAc...) asparagine). 2 EGF-like domains span residues 416–466 (ETNE…SHCE) and 469–516 (GPGR…KKCE). Disulfide bonds link Cys420-Cys438, Cys427-Cys447, Cys449-Cys465, Cys473-Cys493, Cys480-Cys501, Cys503-Cys515, and Cys545-Cys558. The EGF-like 3; calcium-binding domain occupies 517–559 (DINECKEKKACQCPECSCKNTWGSYECSCSGDLLYMRDHDTCI). A helical transmembrane segment spans residues 570–590 (WAAVWLIMLSLGLAAAGAYLV). Over 591 to 628 (YKYRLRQYMDSEIRAIMAQYMPLDSQPEVPNHTNDERA) the chain is Cytoplasmic. Positions 610 to 613 (YMPL) match the Tyrosine-based internalization motif motif.

This sequence belongs to the VSR (BP-80) family. In terms of tissue distribution, expressed at low levels in seeds, seedlings, roots, stems, leaves, flowers and siliques.

The protein localises to the membrane. Its subcellular location is the golgi apparatus membrane. It localises to the cytoplasmic vesicle. It is found in the clathrin-coated vesicle membrane. The protein resides in the prevacuolar compartment membrane. Vacuolar-sorting receptor (VSR) involved in clathrin-coated vesicles sorting from Golgi apparatus to vacuoles. The polypeptide is Vacuolar-sorting receptor 4 (VSR4) (Arabidopsis thaliana (Mouse-ear cress)).